The primary structure comprises 1031 residues: Toll-like receptor 9 (1031 aa).

An N-terminal signal peptide occupies residues 1 to 25; that stretch reads MGPCHGALHPLSLLVQAAALAVALA. The Extracellular segment spans residues 26–817; the sequence is QGTLPAFLPC…LCLDEALSWD (792 aa). The cysteines at positions 35 and 45 are disulfide-linked. Residue 47–51 coordinates DNA; it reads WLFLK. 26 LRR repeats span residues 62–85, 87–110, 122–147, 150–166, 167–190, 198–221, 223–242, 243–268, 283–306, 308–332, 333–356, 363–386, 390–413, 415–440, 470–494, 496–519, 520–543, 545–572, 574–598, 600–622, 627–650, 652–675, 676–699, 701–723, 724–747, and 749–772; these read RGNV…DFVH, SSLR…HFPC, VPTL…SLVS, LSRT…LAGL, HSLR…ALQV, LGNL…LPPS, EYLL…DLAN, LTAL…CMEC, LNHL…WFHA, GNLM…AFQG, LAQL…HLHL, LLSL…TLRS, LPML…IFGA, PGLR…TGEV, CKTL…MFAR, SRLQ…QFMP, LTSL…SFTE, PRLE…SFVA, LPAL…LCSA, LRAL…LYLH, LRSL…TLDN, PKSL…SLVL, LPRL…SLPN, TQLQ…FFAL, ATRL…WFGS, and AGTL…AFVD. N-linked (GlcNAc...) asparagine glycosylation is present at asparagine 64. DNA is bound by residues 72–77 and 95–109; these read SNRIHH and KWNC…MHFP. The cysteines at positions 98 and 110 are disulfide-linked. The N-linked (GlcNAc...) asparagine glycan is linked to asparagine 129. Residues tyrosine 132, arginine 152, and 179–181 contribute to the DNA site; that span reads YYK. A disulfide bridge connects residues cysteine 178 and cysteine 184. The N-linked (GlcNAc...) asparagine glycan is linked to asparagine 200. Tyrosine 208 is a DNA binding site. N-linked (GlcNAc...) asparagine glycans are attached at residues asparagine 210 and asparagine 242. Cystine bridges form between cysteine 255-cysteine 268 and cysteine 258-cysteine 265. Cysteine 258 carries the S-palmitoyl cysteine lipid modification. Arginine 262 is a binding site for DNA. Cysteine 265 carries the S-palmitoyl cysteine lipid modification. Asparagine 340 is a glycosylation site (N-linked (GlcNAc...) asparagine). Cysteine 470 and cysteine 500 form a disulfide bridge. 2 N-linked (GlcNAc...) asparagine glycosylation sites follow: asparagine 474 and asparagine 513. N-linked (GlcNAc...) asparagine glycosylation occurs at asparagine 567. N-linked (GlcNAc...) asparagine glycans are attached at residues asparagine 669, asparagine 694, and asparagine 699. N-linked (GlcNAc...) asparagine glycosylation is present at asparagine 731. 2 disulfide bridges follow: cysteine 764-cysteine 790 and cysteine 766-cysteine 809. The helical transmembrane segment at 818 to 838 threads the bilayer; it reads CFGLSLLTVALGLAVPMLHHL. Topologically, residues 839–1031 are cytoplasmic; sequence CGWDLWYCFH…NFCRGPTTAE (193 aa). Positions 866-1011 constitute a TIR domain; it reads LPYDAFVVFD…SFWAQLGTAL (146 aa).

Belongs to the Toll-like receptor family. Monomer and homodimer. Exists as a monomer in the absence of unmethylated cytidine-phosphate-guanosine (CpG) ligand. Proteolytic processing of an insertion loop (Z-loop) is required for homodimerization upon binding to the unmethylated CpG ligand leading to its activation. Interacts with MYD88 via their respective TIR domains. Interacts with BTK. Interacts (via transmembrane domain) with UNC93B1. Interacts with CD300LH; the interaction may promote full activation of TLR9-triggered innate responses. Interacts with CNPY3 and HSP90B1; this interaction is required for proper folding in the endoplasmic reticulum. Interacts with SMPDL3B. Interacts with CD82; this interaction is essential for TLR9-dependent myddosome formation in response to CpG stimulation. Activated by proteolytic cleavage of the flexible loop between repeats LRR14 and LRR15 within the ectodomain. Cleavage requires UNC93B1. Proteolytically processed by first removing the majority of the ectodomain by either asparagine endopeptidase (AEP) or a cathepsin followed by a trimming event that is solely cathepsin mediated and required for optimal receptor signaling. Post-translationally, palmitoylated by ZDHHC3 in the Golgi regulates TLR9 trafficking from the Golgi to endosomes. Depalmitoylation by PPT1 controls the release of TLR9 from UNC93B1 in endosomes.

It localises to the endoplasmic reticulum membrane. Its subcellular location is the endosome. The protein resides in the lysosome. The protein localises to the cytoplasmic vesicle. It is found in the phagosome. Key component of innate and adaptive immunity. TLRs (Toll-like receptors) control host immune response against pathogens through recognition of molecular patterns specific to microorganisms. TLR9 is a nucleotide-sensing TLR which is activated by unmethylated cytidine-phosphate-guanosine (CpG) dinucleotides. Acts via MYD88 and TRAF6, leading to NF-kappa-B activation, cytokine secretion and the inflammatory response. Upon CpG stimulation, induces B-cell proliferation, activation, survival and antibody production. This Felis catus (Cat) protein is Toll-like receptor 9 (TLR9).